Consider the following 118-residue polypeptide: UPF0342 protein BCG9842_B4422 (118 aa).

The protein belongs to the UPF0342 family.

This is UPF0342 protein BCG9842_B4422 from Bacillus cereus (strain G9842).